The chain runs to 953 residues: Coatomer subunit beta (953 aa).

Residue T2 is modified to N-acetylthreonine. 6 HEAT repeats span residues 96 to 131 (HEMI…KEAE), 132 to 168 (LLEP…NFEH), 240 to 276 (SERA…SAPT), 277 to 314 (AIKA…HPAH), 316 to 353 (RVLQ…SRNV), and 396 to 433 (DMAA…RFDN). K494 is subject to N6-acetyllysine.

As to quaternary structure, oligomeric complex that consists of at least the alpha, beta, beta', gamma, delta, epsilon and zeta subunits. Interacts (via C-terminus) with HIV-1 Nef; the interaction is direct. Interacts with CAPN8 and PRKCE. Interacts with SCYL1. Interacts with COPG1. Interacts with ARF1 (myristoylated); this interaction is required for binding of COPB1 to Golgi membranes. Interacts (via trunk domain) with ARF1 (via switch I region); the interaction is direct. Interacts with KCNK2 (via N-terminus); this interaction increases the channel-mediated whole cell currents and promotes plasma membrane expression of KCNK2. Interacts with anthrax lethal factor (LF); this interaction may facilitate endosomal vesicle membrane translocation of LF and its release from the lumen of endosomal vesicles to external milieu. Interacts with STX17. Interacts with TMEM115. Interacts with TMEM41B.

The protein resides in the cytoplasm. It localises to the golgi apparatus membrane. It is found in the cytoplasmic vesicle. The protein localises to the COPI-coated vesicle membrane. Its subcellular location is the cell membrane. The protein resides in the endoplasmic reticulum-Golgi intermediate compartment. The coatomer is a cytosolic protein complex that binds to dilysine motifs and reversibly associates with Golgi non-clathrin-coated vesicles, which further mediate biosynthetic protein transport from the ER, via the Golgi up to the trans Golgi network. Coatomer complex is required for budding from Golgi membranes, and is essential for the retrograde Golgi-to-ER transport of dilysine-tagged proteins. In mammals, the coatomer can only be recruited by membranes associated to ADP-ribosylation factors (ARFs), which are small GTP-binding proteins; the complex also influences the Golgi structural integrity, as well as the processing, activity, and endocytic recycling of LDL receptors. Plays a functional role in facilitating the transport of kappa-type opioid receptor mRNAs into axons and enhances translation of these proteins. Required for limiting lipid storage in lipid droplets. Involved in lipid homeostasis by regulating the presence of perilipin family members PLIN2 and PLIN3 at the lipid droplet surface and promoting the association of adipocyte surface triglyceride lipase (PNPLA2) with the lipid droplet to mediate lipolysis. Involved in the Golgi disassembly and reassembly processes during cell cycle. Involved in autophagy by playing a role in early endosome function. Plays a role in organellar compartmentalization of secretory compartments including endoplasmic reticulum (ER)-Golgi intermediate compartment (ERGIC), Golgi, trans-Golgi network (TGN) and recycling endosomes, and in biosynthetic transport of CAV1. Promotes degradation of Nef cellular targets CD4 and MHC class I antigens by facilitating their trafficking to degradative compartments. The protein is Coatomer subunit beta (COPB1) of Pongo abelii (Sumatran orangutan).